The following is a 336-amino-acid chain: DNA-directed RNA polymerase subunit alpha (336 aa).

The segment at Met-1–Glu-233 is alpha N-terminal domain (alpha-NTD). The segment at Ile-247–Ser-336 is alpha C-terminal domain (alpha-CTD).

The protein belongs to the RNA polymerase alpha chain family. Homodimer. The RNAP catalytic core consists of 2 alpha, 1 beta, 1 beta' and 1 omega subunit. When a sigma factor is associated with the core the holoenzyme is formed, which can initiate transcription.

The catalysed reaction is RNA(n) + a ribonucleoside 5'-triphosphate = RNA(n+1) + diphosphate. Functionally, DNA-dependent RNA polymerase catalyzes the transcription of DNA into RNA using the four ribonucleoside triphosphates as substrates. This is DNA-directed RNA polymerase subunit alpha from Nitrosomonas europaea (strain ATCC 19718 / CIP 103999 / KCTC 2705 / NBRC 14298).